The primary structure comprises 79 residues: Cell division protein ZapB (79 aa).

Residues 6-78 adopt a coiled-coil conformation; sequence FEKLEVKVQQ…LRALLGKMEE (73 aa).

The protein belongs to the ZapB family. As to quaternary structure, homodimer. The ends of the coiled-coil dimer bind to each other, forming polymers. Interacts with FtsZ.

Its subcellular location is the cytoplasm. In terms of biological role, non-essential, abundant cell division factor that is required for proper Z-ring formation. It is recruited early to the divisome by direct interaction with FtsZ, stimulating Z-ring assembly and thereby promoting cell division earlier in the cell cycle. Its recruitment to the Z-ring requires functional FtsA or ZipA. This chain is Cell division protein ZapB, found in Yersinia enterocolitica serotype O:8 / biotype 1B (strain NCTC 13174 / 8081).